Here is an 856-residue protein sequence, read N- to C-terminus: Wall-associated receptor kinase 17 (856 aa).

The first 42 residues, 1-42 (MPSRSPACRPRGRNRRSAADAVARPLALALILVSTLPRAAHS), serve as a signal peptide directing secretion. N-linked (GlcNAc...) asparagine glycans are attached at residues N171 and N234. The EGF-like 1 domain maps to 297–334 (FEKLCKYGTCVDAPTGAGYLCKCPSGYDGNPYVSDGCQ). Cystine bridges form between C301/C306, C319/C333, C339/C353, C347/C362, and C364/C379. Positions 335 to 380 (DINECRNYNSNNCTYQNLCNNTLGGYTCSCPENNIGDGYRTGTGCN) constitute an EGF-like 2; calcium-binding domain. N-linked (GlcNAc...) asparagine glycosylation is found at N346 and N354. N380 carries N-linked (GlcNAc...) asparagine glycosylation. Residues 452–470 (VLGVSLVLMVTTTTAASCY) traverse the membrane as a helical segment. The region spanning 527-805 (YSESRILGRG…VLQELRRSFT (279 aa)) is the Protein kinase domain. Residues 533–541 (LGRGGQGTV) and K555 each bind ATP. D652 (proton acceptor) is an active-site residue. Residues 816–844 (SIQENSEQEEKHLHESRSIPSLQSSEVST) form a disordered region. Over residues 823–832 (QEEKHLHESR) the composition is skewed to basic and acidic residues. Over residues 833–844 (SIPSLQSSEVST) the composition is skewed to polar residues.

This sequence belongs to the protein kinase superfamily. Ser/Thr protein kinase family. Interacts with WAK17 isoform 2; the interaction is direct. Interacts with LRR5; the interaction is direct. In terms of assembly, interacts with WAK17 isoform 1; the interaction is direct. As to quaternary structure, (Microbial infection) Interacts with G.zeae CFEM1 (via CFEM domain); the interaction is direct. Interacts with G.zeae CFEMN1; the interaction is direct. Interacts with G.zeae CFEM5; the interaction is direct. Mn(2+) is required as a cofactor. Requires Mg(2+) as cofactor.

The protein resides in the cell membrane. The catalysed reaction is L-seryl-[protein] + ATP = O-phospho-L-seryl-[protein] + ADP + H(+). It carries out the reaction L-threonyl-[protein] + ATP = O-phospho-L-threonyl-[protein] + ADP + H(+). Kinase that contributes to activation of the hypersensitive response, a form of programmed cell death, upon fungal infection. Its function is as follows. Secreted protein that contributes to activation of the hypersensitive response, a form of programmed cell death, upon fungal infection. May sense the presence of fungal material and relay the signal to WAK17 isoform 1. In Zea mays (Maize), this protein is Wall-associated receptor kinase 17.